The primary structure comprises 290 residues: MRIADYSVTKAVLDRHGFTFKKSFGQNFLTDTNILQKIVDTAEIDQNVNVIEIGPGIGALTEFLAENAAEVMAFEIDDRLVPILADTLRDFDNVQVVNQDILKADLQTQIKQFKNPDLPIKVVANLPYYITTPILMHLIESKIPFQEFVVMMQREVADRISAEPNTKAYGSLSIAVQYYMTAKVAFIVPRTVFVPAPNVDSAILKMVRRDQPLIEVKDEDFFFRVSRLSFVHRRKTLWNNLTSHFGKSEDIKTKLEKGLALADIKPSIRGEALSIQDFGKLADALKEVGL.

S-adenosyl-L-methionine-binding residues include N27, L29, G54, E75, D100, and N125.

It belongs to the class I-like SAM-binding methyltransferase superfamily. rRNA adenine N(6)-methyltransferase family. RsmA subfamily.

It localises to the cytoplasm. It catalyses the reaction adenosine(1518)/adenosine(1519) in 16S rRNA + 4 S-adenosyl-L-methionine = N(6)-dimethyladenosine(1518)/N(6)-dimethyladenosine(1519) in 16S rRNA + 4 S-adenosyl-L-homocysteine + 4 H(+). Its function is as follows. Specifically dimethylates two adjacent adenosines (A1518 and A1519) in the loop of a conserved hairpin near the 3'-end of 16S rRNA in the 30S particle. May play a critical role in biogenesis of 30S subunits. The chain is Ribosomal RNA small subunit methyltransferase A from Streptococcus pyogenes serotype M18 (strain MGAS8232).